The chain runs to 737 residues: Catalase-peroxidase (737 aa).

Positions 89 to 219 form a cross-link, tryptophyl-tyrosyl-methioninium (Trp-Tyr) (with M-245); the sequence is WHSAGTYRVF…LAASHMGLIY (131 aa). Histidine 90 (proton acceptor) is an active-site residue. Positions 219-245 form a cross-link, tryptophyl-tyrosyl-methioninium (Tyr-Met) (with W-89); that stretch reads YVNPEGPNGNPDPKAAARDIRVTFGRM. Histidine 260 is a heme b binding site.

The protein belongs to the peroxidase family. Peroxidase/catalase subfamily. In terms of assembly, homodimer or homotetramer. Heme b serves as cofactor. In terms of processing, formation of the three residue Trp-Tyr-Met cross-link is important for the catalase, but not the peroxidase activity of the enzyme.

It localises to the cytoplasm. It catalyses the reaction H2O2 + AH2 = A + 2 H2O. It carries out the reaction 2 H2O2 = O2 + 2 H2O. Its function is as follows. Bifunctional enzyme with both catalase and broad-spectrum peroxidase activity. This chain is Catalase-peroxidase, found in Aspergillus terreus (strain NIH 2624 / FGSC A1156).